The following is a 188-amino-acid chain: MNLLIVGLGNPGSNFLHTRHNVGFGLIDKLVMKNALSLRKAKNYEYADFNIDSRRIVLIKPLTYMNLSGNIFPFVFSKFYMKINNLLVVVDNVDLPLGKCRLRKVGGASTHNGLRSISESLGSTKYGRLYIGVGNNSAFALKDFVLSKFNDSELVRVKNVFNFLSEEILGIDEFSFEHKIATINSSSF.

Phenylalanine 15 provides a ligand contact to tRNA. Histidine 20 (proton acceptor) is an active-site residue. Positions 64, 66, and 112 each coordinate tRNA.

The protein belongs to the PTH family. As to quaternary structure, monomer.

The protein localises to the cytoplasm. The catalysed reaction is an N-acyl-L-alpha-aminoacyl-tRNA + H2O = an N-acyl-L-amino acid + a tRNA + H(+). In terms of biological role, hydrolyzes ribosome-free peptidyl-tRNAs (with 1 or more amino acids incorporated), which drop off the ribosome during protein synthesis, or as a result of ribosome stalling. Catalyzes the release of premature peptidyl moieties from peptidyl-tRNA molecules trapped in stalled 50S ribosomal subunits, and thus maintains levels of free tRNAs and 50S ribosomes. The polypeptide is Peptidyl-tRNA hydrolase (Borrelia duttonii (strain Ly)).